The sequence spans 320 residues: Aspartate carbamoyltransferase catalytic subunit (320 aa).

Carbamoyl phosphate-binding residues include Arg-57 and Thr-58. Residue Lys-85 participates in L-aspartate binding. Arg-107, His-141, and Gln-144 together coordinate carbamoyl phosphate. Arg-174 and Arg-228 together coordinate L-aspartate. The carbamoyl phosphate site is built by Gly-269 and Pro-270.

It belongs to the aspartate/ornithine carbamoyltransferase superfamily. ATCase family. In terms of assembly, heterododecamer (2C3:3R2) of six catalytic PyrB chains organized as two trimers (C3), and six regulatory PyrI chains organized as three dimers (R2).

It catalyses the reaction carbamoyl phosphate + L-aspartate = N-carbamoyl-L-aspartate + phosphate + H(+). Its pathway is pyrimidine metabolism; UMP biosynthesis via de novo pathway; (S)-dihydroorotate from bicarbonate: step 2/3. Functionally, catalyzes the condensation of carbamoyl phosphate and aspartate to form carbamoyl aspartate and inorganic phosphate, the committed step in the de novo pyrimidine nucleotide biosynthesis pathway. The protein is Aspartate carbamoyltransferase catalytic subunit of Mycobacterium marinum (strain ATCC BAA-535 / M).